The sequence spans 364 residues: Spermidine/putrescine import ATP-binding protein PotA (364 aa).

The ABC transporter domain maps to Leu-5–Ile-235. ATP is bound at residue Gly-37–Thr-44.

Belongs to the ABC transporter superfamily. Spermidine/putrescine importer (TC 3.A.1.11.1) family. As to quaternary structure, the complex is composed of two ATP-binding proteins (PotA), two transmembrane proteins (PotB and PotC) and a solute-binding protein (PotD).

It is found in the cell membrane. It catalyses the reaction ATP + H2O + polyamine-[polyamine-binding protein]Side 1 = ADP + phosphate + polyamineSide 2 + [polyamine-binding protein]Side 1.. In terms of biological role, part of the ABC transporter complex PotABCD involved in spermidine/putrescine import. Responsible for energy coupling to the transport system. This chain is Spermidine/putrescine import ATP-binding protein PotA, found in Staphylococcus aureus (strain USA300).